We begin with the raw amino-acid sequence, 896 residues long: Zinc finger protein 574 (896 aa).

C2H2-type zinc fingers lie at residues 16 to 38, 76 to 98, and 126 to 148; these read YVCS…QNSH, YQCL…QELH, and YECV…RQTH. Serine 164 is modified (phosphoserine). Residues 214–236 form a C2H2-type 4 zinc finger; the sequence is YKCSECSQLFQLPADFLEHQATH. Positions 259-272 are enriched in low complexity; it reads VEVPVSQPEPVPSS. A disordered region spans residues 259-303; it reads VEVPVSQPEPVPSSDHSYELRNGEALGRDRRGRRARRNNSGEPGG. Over residues 274-287 the composition is skewed to basic and acidic residues; it reads HSYELRNGEALGRD. Serine 298 is modified (phosphoserine). C2H2-type zinc fingers lie at residues 309–331, 336–358, 364–386, and 392–413; these read LFCS…LRSH, FKCP…LGDH, FLCV…RRAH, and HSCP…RRTH. Positions 434–460 are disordered; that stretch reads FPEPAPAETGEPEAPEPPVAEESSAEP. 6 consecutive C2H2-type zinc fingers follow at residues 466-489, 495-517, 523-545, 551-573, 579-601, and 607-630; these read YRCL…RFVH, HKCS…LRTH, FPCP…RLTH, YRCG…RLVH, YRCQ…RYHH, and YKCR…LVAH. Residues 636-659 form a C2H2-type 15; degenerate zinc finger; sequence HRCSSCGAAFPSSLRLREHRCAAA. The C2H2-type 16 zinc-finger motif lies at 667-689; it reads FECGTCGKKVGSAARLQAHEAAH. Positions 687 to 733 are disordered; it reads AAHAAAGPGEVLAKEPPAPRAPRAARTPITSPTTLGSAAPAAPAAPA. The span at 707–732 shows a compositional bias: low complexity; that stretch reads APRAARTPITSPTTLGSAAPAAPAAP. Phosphoserine is present on serine 717. C2H2-type zinc fingers lie at residues 738-760, 766-788, 794-816, and 822-844; these read LECS…RRIH, YPCP…RRLH, FACE…RRIH, and YSCP…RKTH. Asymmetric dimethylarginine is present on arginine 832.

Belongs to the krueppel C2H2-type zinc-finger protein family.

The protein localises to the nucleus. Its function is as follows. May be involved in transcriptional regulation. This chain is Zinc finger protein 574 (ZNF574), found in Bos taurus (Bovine).